A 464-amino-acid polypeptide reads, in one-letter code: MAVTTTEFDTIAAISTPPGEGGISIIRLSGEEVFQVAAKLFKGADLTQVGSHTIHYGHILDPETGDEVDEVMVTVMRAPKTYTKEDIIEINCHGGIVATNRILQLCLSYGARLAEPGEYTKRAFLNGRIDLTQAESVMDLIRAKTDKSMKVALDQLDGDLSKLIRNLRQDILDALAQVEVNIDYPEYDDVETMTTKMLLEKAHEVKQQIKTLLATAKQGKVLREGLATAIVGRPNVGKSSLLNHLLHEDKAIVTDVAGTTRDVIEEYVNVKGVPLKLIDTAGIRDTTDKVEKIGVERSRKAINTADLVMLVLNASEPLTAEDEALLTATKDTQRILILNKTDLPLQLDLAAVRQVAGDSPIIETSILQSTGMDQLEETIAHLFFDEGIESSQNTVMVTNARHIGLLHQASAALDDVQNGIAAGMPVDLVQIDMTRAWDLLGEITGDSYQDELLDQLFSQFCLGK.

(6S)-5-formyl-5,6,7,8-tetrahydrofolate-binding residues include R27, E89, and R128. Residues 225-384 (GLATAIVGRP…LEETIAHLFF (160 aa)) form the TrmE-type G domain. Position 235 (N235) interacts with K(+). Residues 235–240 (NVGKSS), 254–260 (TDVAGTT), and 279–282 (DTAG) contribute to the GTP site. S239 provides a ligand contact to Mg(2+). Positions 254, 256, and 259 each coordinate K(+). T260 is a Mg(2+) binding site. K464 contributes to the (6S)-5-formyl-5,6,7,8-tetrahydrofolate binding site.

The protein belongs to the TRAFAC class TrmE-Era-EngA-EngB-Septin-like GTPase superfamily. TrmE GTPase family. In terms of assembly, homodimer. Heterotetramer of two MnmE and two MnmG subunits. Requires K(+) as cofactor.

Its subcellular location is the cytoplasm. In terms of biological role, exhibits a very high intrinsic GTPase hydrolysis rate. Involved in the addition of a carboxymethylaminomethyl (cmnm) group at the wobble position (U34) of certain tRNAs, forming tRNA-cmnm(5)s(2)U34. The protein is tRNA modification GTPase MnmE of Levilactobacillus brevis (strain ATCC 367 / BCRC 12310 / CIP 105137 / JCM 1170 / LMG 11437 / NCIMB 947 / NCTC 947) (Lactobacillus brevis).